The chain runs to 300 residues: Ribonuclease HIII (300 aa).

An RNase H type-2 domain is found at 86-300 (RSRIGVDESG…FNEVLGSGNQ (215 aa)). Residues D92, E93, and D196 each coordinate a divalent metal cation.

This sequence belongs to the RNase HII family. RnhC subfamily. The cofactor is Mn(2+). Requires Mg(2+) as cofactor.

Its subcellular location is the cytoplasm. It carries out the reaction Endonucleolytic cleavage to 5'-phosphomonoester.. Its function is as follows. Endonuclease that specifically degrades the RNA of RNA-DNA hybrids. This Chlamydia trachomatis serovar A (strain ATCC VR-571B / DSM 19440 / HAR-13) protein is Ribonuclease HIII.